A 562-amino-acid chain; its full sequence is Putative transport protein ETA_21820 (562 aa).

Helical transmembrane passes span 8-28 (LLIG…LCLG), 32-52 (LGSV…LLGQ), 66-86 (FMLF…SIFF), 94-114 (MLAI…GKLF), and 158-178 (HLSL…IFGA). RCK C-terminal domains follow at residues 202-288 (LDPD…SFRN) and 290-373 (KEVF…RIGF). Transmembrane regions (helical) follow at residues 383–403 (LLAF…TFQF), 406–426 (FNFG…LGFL), 440–460 (ALTM…GLSA), 473–493 (LLML…CFLF), 503–523 (ALLF…EIIS), and 540–560 (AIAN…WPIL).

Belongs to the AAE transporter (TC 2.A.81) family. YbjL subfamily.

Its subcellular location is the cell membrane. This is Putative transport protein ETA_21820 from Erwinia tasmaniensis (strain DSM 17950 / CFBP 7177 / CIP 109463 / NCPPB 4357 / Et1/99).